Consider the following 288-residue polypeptide: Bifunctional protein FolD (288 aa).

NADP(+)-binding positions include 166 to 168 and isoleucine 232; that span reads GAS.

Belongs to the tetrahydrofolate dehydrogenase/cyclohydrolase family. In terms of assembly, homodimer.

The enzyme catalyses (6R)-5,10-methylene-5,6,7,8-tetrahydrofolate + NADP(+) = (6R)-5,10-methenyltetrahydrofolate + NADPH. The catalysed reaction is (6R)-5,10-methenyltetrahydrofolate + H2O = (6R)-10-formyltetrahydrofolate + H(+). The protein operates within one-carbon metabolism; tetrahydrofolate interconversion. In terms of biological role, catalyzes the oxidation of 5,10-methylenetetrahydrofolate to 5,10-methenyltetrahydrofolate and then the hydrolysis of 5,10-methenyltetrahydrofolate to 10-formyltetrahydrofolate. This chain is Bifunctional protein FolD, found in Citrobacter koseri (strain ATCC BAA-895 / CDC 4225-83 / SGSC4696).